The chain runs to 163 residues: Nucleotide-binding protein CJJ81176_0398 (163 aa).

Belongs to the YajQ family.

Its function is as follows. Nucleotide-binding protein. This chain is Nucleotide-binding protein CJJ81176_0398, found in Campylobacter jejuni subsp. jejuni serotype O:23/36 (strain 81-176).